The primary structure comprises 358 residues: Small ribosomal subunit biogenesis GTPase RsgA (358 aa).

The CP-type G domain occupies 76–234; that stretch reads STEIDRPAVA…LADSPGFNQP (159 aa). GTP is bound by residues 125–128 and 176–184; these read NKID and GPSGVGKSS. Residues C259, C264, H266, and C272 each coordinate Zn(2+). The segment at 319–358 is disordered; it reads TYEPKLANKKYRRPSRRGKNQDQERYENKTLQDIYNDDSE. Over residues 325-336 the composition is skewed to basic residues; that stretch reads ANKKYRRPSRRG. Basic and acidic residues predominate over residues 337 to 348; sequence KNQDQERYENKT.

Belongs to the TRAFAC class YlqF/YawG GTPase family. RsgA subfamily. As to quaternary structure, monomer. Associates with 30S ribosomal subunit, binds 16S rRNA. It depends on Zn(2+) as a cofactor.

The protein localises to the cytoplasm. One of several proteins that assist in the late maturation steps of the functional core of the 30S ribosomal subunit. Helps release RbfA from mature subunits. May play a role in the assembly of ribosomal proteins into the subunit. Circularly permuted GTPase that catalyzes slow GTP hydrolysis, GTPase activity is stimulated by the 30S ribosomal subunit. This chain is Small ribosomal subunit biogenesis GTPase RsgA, found in Microcystis aeruginosa (strain NIES-843 / IAM M-2473).